Here is a 101-residue protein sequence, read N- to C-terminus: NADH-quinone oxidoreductase subunit K (101 aa).

3 helical membrane-spanning segments follow: residues 4-24 (LEHYLTVAATLFVIGIFGLFL), 30-50 (IVLLMSIELMLLAVNINLVAF), and 65-85 (FVLTVAAAEAAIGLAILVCFF).

The protein belongs to the complex I subunit 4L family. NDH-1 is composed of 14 different subunits. Subunits NuoA, H, J, K, L, M, N constitute the membrane sector of the complex.

The protein resides in the cell inner membrane. It catalyses the reaction a quinone + NADH + 5 H(+)(in) = a quinol + NAD(+) + 4 H(+)(out). Its function is as follows. NDH-1 shuttles electrons from NADH, via FMN and iron-sulfur (Fe-S) centers, to quinones in the respiratory chain. The immediate electron acceptor for the enzyme in this species is believed to be ubiquinone. Couples the redox reaction to proton translocation (for every two electrons transferred, four hydrogen ions are translocated across the cytoplasmic membrane), and thus conserves the redox energy in a proton gradient. The chain is NADH-quinone oxidoreductase subunit K from Ruegeria pomeroyi (strain ATCC 700808 / DSM 15171 / DSS-3) (Silicibacter pomeroyi).